A 1158-amino-acid polypeptide reads, in one-letter code: ATP-dependent helicase/deoxyribonuclease subunit B (1158 aa).

The UvrD-like helicase ATP-binding domain occupies 1–275 (MTLHAYLGRA…QYFNQLYRFN (275 aa)). An ATP-binding site is contributed by 8 to 15 (GRAGTGKS). The region spanning 269–583 (NQLYRFNNQD…SIGTMDLAKV (315 aa)) is the UvrD-like helicase C-terminal domain. [4Fe-4S] cluster-binding residues include Cys-784, Cys-1112, Cys-1115, and Cys-1121.

This sequence belongs to the helicase family. AddB/RexB type 1 subfamily. In terms of assembly, heterodimer of AddA and AddB. It depends on Mg(2+) as a cofactor. [4Fe-4S] cluster is required as a cofactor.

Its function is as follows. The heterodimer acts as both an ATP-dependent DNA helicase and an ATP-dependent, dual-direction single-stranded exonuclease. Recognizes the chi site generating a DNA molecule suitable for the initiation of homologous recombination. The AddB subunit has 5' -&gt; 3' nuclease activity but not helicase activity. This chain is ATP-dependent helicase/deoxyribonuclease subunit B, found in Staphylococcus aureus (strain MW2).